Here is a 425-residue protein sequence, read N- to C-terminus: MALKITGKAEGQLQLHLITKQKQFAVPDVPYSIRANVSTKELNVLVNTLLKDAGNAEAGKVEFDFLLNGEFPLGQHLKERDVSFEDTVELEYVERYPAPEPQDCLLHDDWVSAVEARDNWILTGCYDNTLNLWTTKGKHKLTIPGHIAPVKGVTWISLDEEKGVFASASQDQTVMLWEWNVAANSVECVQVCKGHERGVDCIAANGSKTKMATGSWDTMLKIWSTDVRSGGGDSEPSTSKRQKLDQGSARTPLMTLAGHRECISGVQWIDDNTLVTSSWDHTIKIWDLALNGIKSEISGNKSFFDLSYSKLNGLIITASPDKNLRLYDPKSNQGTLVKNTYLGHTQWVQSVRWSTTNEYLFVSGAYDNHVKLWDYRSPKAPIFELIGHEDKVLACDWSNPRFILSGGSDNSVRVFKSKIAIGGEK.

Residues 13 to 94 (LQLHLITKQK…EDTVELEYVE (82 aa)) form a ubiquitin-like (UBL) domain region. WD repeat units follow at residues 106 to 143 (LHDD…KLTI), 145 to 187 (GHIA…NSVE), 194 to 233 (GHER…GGGD), 258 to 296 (GHRE…IKSE), 298 to 337 (SGNK…GTLV), 343 to 383 (GHTQ…APIF), and 387 to 425 (GHED…GGEK). Positions 227–247 (VRSGGGDSEPSTSKRQKLDQG) are disordered.

This sequence belongs to the WD repeat WDR12/YTM1 family.

It is found in the nucleus. The protein localises to the nucleolus. The protein resides in the nucleoplasm. Required for maturation of ribosomal RNAs and formation of the large ribosomal subunit. The sequence is that of Ribosome biogenesis protein WDR12 homolog from Culex quinquefasciatus (Southern house mosquito).